We begin with the raw amino-acid sequence, 299 residues long: Protoheme IX farnesyltransferase (299 aa).

A run of 9 helical transmembrane segments spans residues 27–47 (VVALMLLTSVVGMSLAPHEHF), 53–73 (LIALVGIALMAGSAAAFNHLI), 97–117 (FNVLLFALLIGSLGFLSLMLW), 121–141 (LTAYLTFASLLGYAAVYTLYL), 149–169 (IVIAGIAGAMPPLLGWTSITG), 175–195 (AWVLVMIIFIWTPPHFWALAI), 222–242 (ILLYAILLALVCMLPVLVGMA), 244–264 (YLYLFSALVLNVCFVRYAIKL), and 273–293 (AIEMFRFSIYFLLLLFCALLL).

The protein belongs to the UbiA prenyltransferase family. Protoheme IX farnesyltransferase subfamily.

Its subcellular location is the cell inner membrane. The enzyme catalyses heme b + (2E,6E)-farnesyl diphosphate + H2O = Fe(II)-heme o + diphosphate. It participates in porphyrin-containing compound metabolism; heme O biosynthesis; heme O from protoheme: step 1/1. In terms of biological role, converts heme B (protoheme IX) to heme O by substitution of the vinyl group on carbon 2 of heme B porphyrin ring with a hydroxyethyl farnesyl side group. This Vibrio vulnificus (strain CMCP6) protein is Protoheme IX farnesyltransferase.